The primary structure comprises 329 residues: Ribosomal RNA small subunit methyltransferase H (329 aa).

S-adenosyl-L-methionine is bound by residues 39–41 (GGY), aspartate 57, phenylalanine 84, aspartate 100, and glutamine 107. Residues 285 to 305 (GPDKDELAQNPRSRSALLRVG) are disordered.

This sequence belongs to the methyltransferase superfamily. RsmH family.

The protein resides in the cytoplasm. The catalysed reaction is cytidine(1402) in 16S rRNA + S-adenosyl-L-methionine = N(4)-methylcytidine(1402) in 16S rRNA + S-adenosyl-L-homocysteine + H(+). Its function is as follows. Specifically methylates the N4 position of cytidine in position 1402 (C1402) of 16S rRNA. The chain is Ribosomal RNA small subunit methyltransferase H from Ruegeria sp. (strain TM1040) (Silicibacter sp.).